A 264-amino-acid chain; its full sequence is Thymidylate synthase (264 aa).

DUMP is bound at residue R21. A (6R)-5,10-methylene-5,6,7,8-tetrahydrofolate-binding site is contributed by H51. The active-site Nucleophile is C146. DUMP contacts are provided by residues 166–169, N177, and 207–209; these read RSAD and HIY. D169 lines the (6R)-5,10-methylene-5,6,7,8-tetrahydrofolate pocket. Residue A263 coordinates (6R)-5,10-methylene-5,6,7,8-tetrahydrofolate.

The protein belongs to the thymidylate synthase family. Bacterial-type ThyA subfamily. In terms of assembly, homodimer.

Its subcellular location is the cytoplasm. It carries out the reaction dUMP + (6R)-5,10-methylene-5,6,7,8-tetrahydrofolate = 7,8-dihydrofolate + dTMP. It functions in the pathway pyrimidine metabolism; dTTP biosynthesis. Catalyzes the reductive methylation of 2'-deoxyuridine-5'-monophosphate (dUMP) to 2'-deoxythymidine-5'-monophosphate (dTMP) while utilizing 5,10-methylenetetrahydrofolate (mTHF) as the methyl donor and reductant in the reaction, yielding dihydrofolate (DHF) as a by-product. This enzymatic reaction provides an intracellular de novo source of dTMP, an essential precursor for DNA biosynthesis. The protein is Thymidylate synthase of Brucella canis (strain ATCC 23365 / NCTC 10854 / RM-666).